The following is a 479-amino-acid chain: Ribosomal RNA small subunit methyltransferase F (479 aa).

S-adenosyl-L-methionine contacts are provided by residues 128–134 (ASAPGSK), E152, D179, and D197. C250 functions as the Nucleophile in the catalytic mechanism.

The protein belongs to the class I-like SAM-binding methyltransferase superfamily. RsmB/NOP family.

The protein resides in the cytoplasm. The enzyme catalyses cytidine(1407) in 16S rRNA + S-adenosyl-L-methionine = 5-methylcytidine(1407) in 16S rRNA + S-adenosyl-L-homocysteine + H(+). Its function is as follows. Specifically methylates the cytosine at position 1407 (m5C1407) of 16S rRNA. In Shewanella halifaxensis (strain HAW-EB4), this protein is Ribosomal RNA small subunit methyltransferase F.